A 553-amino-acid polypeptide reads, in one-letter code: Putative transport protein YidE (553 aa).

The next 5 membrane-spanning stretches (helical) occupy residues 4-24 (IALT…IGNV), 28-48 (GVGL…HFVS), 65-85 (FGLI…FFAS), 95-115 (LFAV…HKLF), and 158-178 (MSYA…MWML). RCK C-terminal domains are found at residues 191-276 (QQHE…VIGQ) and 279-361 (DTSL…VLGN). The next 6 helical transmembrane spans lie at 371–391 (MLPV…PVFV), 393–413 (GFPA…ALIL), 439–459 (IVLF…HTLV), 464–484 (LSWI…VGIL), 493–513 (YLTM…LAFA), and 533–553 (LVMF…WSIG).

The protein belongs to the AAE transporter (TC 2.A.81) family. YidE subfamily.

It localises to the cell membrane. The polypeptide is Putative transport protein YidE (Escherichia coli O6:H1 (strain CFT073 / ATCC 700928 / UPEC)).